Here is a 630-residue protein sequence, read N- to C-terminus: 1-deoxy-D-xylulose-5-phosphate synthase (630 aa).

Thiamine diphosphate contacts are provided by residues His72 and 113 to 115 (GHS). Asp144 is a binding site for Mg(2+). Thiamine diphosphate is bound by residues 145-146 (GA), Asn173, Tyr284, and Glu367. Asn173 contributes to the Mg(2+) binding site.

The protein belongs to the transketolase family. DXPS subfamily. In terms of assembly, homodimer. Mg(2+) serves as cofactor. Thiamine diphosphate is required as a cofactor.

The catalysed reaction is D-glyceraldehyde 3-phosphate + pyruvate + H(+) = 1-deoxy-D-xylulose 5-phosphate + CO2. It functions in the pathway metabolic intermediate biosynthesis; 1-deoxy-D-xylulose 5-phosphate biosynthesis; 1-deoxy-D-xylulose 5-phosphate from D-glyceraldehyde 3-phosphate and pyruvate: step 1/1. Its function is as follows. Catalyzes the acyloin condensation reaction between C atoms 2 and 3 of pyruvate and glyceraldehyde 3-phosphate to yield 1-deoxy-D-xylulose-5-phosphate (DXP). In Bacillus cytotoxicus (strain DSM 22905 / CIP 110041 / 391-98 / NVH 391-98), this protein is 1-deoxy-D-xylulose-5-phosphate synthase.